The following is a 121-amino-acid chain: Large ribosomal subunit protein uL22 (121 aa).

It belongs to the universal ribosomal protein uL22 family. Part of the 50S ribosomal subunit.

Its function is as follows. This protein binds specifically to 23S rRNA; its binding is stimulated by other ribosomal proteins, e.g. L4, L17, and L20. It is important during the early stages of 50S assembly. It makes multiple contacts with different domains of the 23S rRNA in the assembled 50S subunit and ribosome. In terms of biological role, the globular domain of the protein is located near the polypeptide exit tunnel on the outside of the subunit, while an extended beta-hairpin is found that lines the wall of the exit tunnel in the center of the 70S ribosome. The protein is Large ribosomal subunit protein uL22 of Synechocystis sp. (strain ATCC 27184 / PCC 6803 / Kazusa).